Reading from the N-terminus, the 251-residue chain is Hydroxyacylglutathione hydrolase (251 aa).

7 residues coordinate Zn(2+): histidine 53, histidine 55, aspartate 57, histidine 58, histidine 110, aspartate 127, and histidine 165.

The protein belongs to the metallo-beta-lactamase superfamily. Glyoxalase II family. As to quaternary structure, monomer. It depends on Zn(2+) as a cofactor.

The enzyme catalyses an S-(2-hydroxyacyl)glutathione + H2O = a 2-hydroxy carboxylate + glutathione + H(+). It functions in the pathway secondary metabolite metabolism; methylglyoxal degradation; (R)-lactate from methylglyoxal: step 2/2. Thiolesterase that catalyzes the hydrolysis of S-D-lactoyl-glutathione to form glutathione and D-lactic acid. The sequence is that of Hydroxyacylglutathione hydrolase from Escherichia coli (strain SMS-3-5 / SECEC).